A 933-amino-acid polypeptide reads, in one-letter code: MTELKAKGPRAPHVAGGPPSPEVGSPLLXRPAAGPFQGSQTSDTLPEVPAIPISLDGLLFPRPCQGQDPLDEKTQDQQSLTDVEGAYSRAEATRGTGGSSSRPPEKDSGLLDSVLDTLLAPSGPGQSQPSPPACEVTSSWCLFGPELPEDPPAAPATQRVLSPLMSRSGGKAGDSSGTAAAHKVLPRGLSPSRQLLLPASGSPHWSGVPVKPSPQPTAVEVEEEDGSESEDSAGPLLKGNPRALGGAAAGGGAAAVPPGAAAGGVALVPKEDSRFSAPRVALVEQDAPMAPGRSPLATTTMDFIHVPIRPLNHALLAARTRHLLEEESYDGGAGAASAFAPPRSSPSASSTPVAVGDFPDCAYPPDADPKDDAYPLYGDFQPPALKIKEEEEGAEASARSPRSYLVAGANPAAFPDFPLGPPPPLPPRAPPSRPGEAAVTAAPASASVSSSSSSGSTLECILYKAEGAPPQQGPFAPPPCKAPGAGGCLLPRDGLPSTSASAAXAGAAPALYPALGLNGLPQLGYQAAVLKEGLQQVYPPYLNYLRPDSEASQSPQYSFESLPQKICLICGDEASGCHYGVLTCGSCKVFFKRAMEGQHNYLCAGRNDCIVDKIRRKNCPACRLRKCCQAGMVLGGRKFKKFNKVRVMRALDAVALPQPVGIPNESQALSQRFTFSPGQDIQFFPPLINLLVSIEPDVIYAGHDNSKPDTSSSLLTSLNQLGERQLLSVVKWSKSLPGFRNLHIDDQITLIQYSWMSLMVFGLGWRSYKHVSGQMLYFAPDLILNEQRMKESSFYSLCLTMWQIPQEFVKLQVSQEEFLCMKVLLLLNTIPLEGLRSQTQFEEMRSSYIRELIKAIGLRQKGVVSSSQRFYQLTKLLDNLHDLVKQLHLYCLNTFIQSRALSVEFPEMMSEVIAAQLPKILAGMVKPLLFHKK.

The AF3; mediates transcriptional activation stretch occupies residues 1 to 164; the sequence is MTELKAKGPR…PATQRVLSPL (164 aa). The tract at residues 1-256 is disordered; that stretch reads MTELKAKGPR…AAAGGGAAAV (256 aa). The tract at residues 1–566 is modulating, Pro-Rich; it reads MTELKAKGPR…YSFESLPQKI (566 aa). Ser-20 carries the post-translational modification Phosphoserine. 2 consecutive short sequence motifs (LXXL motif) follow at residues 55–59 and 115–119; these read LDGLL and LDTLL. Residues Ser-130 and Ser-162 each carry the phosphoserine modification. Residues 165–305 are mediates transcriptional transrepression; the sequence is MSRSGGKAGD…LATTTMDFIH (141 aa). A Nuclear localization signal motif is present at residues 183 to 187; the sequence is KVLPR. Ser-190 and Ser-213 each carry phosphoserine. Over residues 220 to 231 the composition is skewed to acidic residues; the sequence is EVEEEDGSESED. Ser-294 is subject to Phosphoserine; by MAPK1. Residues 332-380 form a disordered region; the sequence is GAGAASAFAPPRSSPSASSTPVAVGDFPDCAYPPDADPKDDAYPLYGDF. Positions 335-350 are enriched in low complexity; sequence AASAFAPPRSSPSASS. Ser-345 is modified (phosphoserine; by MAPK). Residue Lys-388 forms a Glycyl lysine isopeptide (Lys-Gly) (interchain with G-Cter in SUMO); alternate linkage. Lys-388 is covalently cross-linked (Glycyl lysine isopeptide (Lys-Gly) (interchain with G-Cter in ubiquitin); alternate). Ser-400 is modified (phosphoserine; by CDK2). The tract at residues 415–454 is disordered; sequence PDFPLGPPPPLPPRAPPSRPGEAAVTAAPASASVSSSSSS. Residues 418-433 show a composition bias toward pro residues; the sequence is PLGPPPPLPPRAPPSR. The segment covering 434–454 has biased composition (low complexity); sequence PGEAAVTAAPASASVSSSSSS. Residues 456-546 are AF1; mediates transcriptional activation; the sequence is STLECILYKA…VYPPYLNYLR (91 aa). Lys-531 is covalently cross-linked (Glycyl lysine isopeptide (Lys-Gly) (interchain with G-Cter in SUMO)). 2 consecutive NR C4-type zinc fingers follow at residues 567-587 and 603-627; these read CLICGDEASGCHYGVLTCGSC and CAGRNDCIVDKIRRKNCPACRLRKC. The segment at residues 567-639 is a DNA-binding region (nuclear receptor); it reads CLICGDEASG…AGMVLGGRKF (73 aa). Position 676 is a phosphoserine (Ser-676). The 235-residue stretch at 679–913 folds into the NR LBD domain; it reads QDIQFFPPLI…EFPEMMSEVI (235 aa). The segment at 687–933 is AF2; mediates transcriptional activation; it reads LINLLVSIEP…MVKPLLFHKK (247 aa). Arg-766 contributes to the progesterone binding site.

This sequence belongs to the nuclear hormone receptor family. In terms of assembly, interacts with SMARD1 and UNC45A. Interacts with CUEDC2; the interaction promotes ubiquitination, decreases sumoylation, and represses transcriptional activity. Interacts with PIAS3; the interaction promotes sumoylation of PR in a hormone-dependent manner, inhibits DNA-binding, and alters nuclear export. Interacts with SP1; the interaction requires ligand-induced phosphorylation on Ser-345 by ERK1/2-MAPK. Interacts with PRMT2. Interacts with NCOA2 and NCOA1. Interacts with KLF9. Interacts with GTF2B. Post-translationally, phosphorylated on multiple serine sites. Several of these sites are hormone-dependent. Phosphorylation on Ser-294 is highly hormone-dependent and modulates ubiquitination and sumoylation on Lys-388. Phosphorylation on Ser-345 also requires induction by hormone. Basal phosphorylation on Ser-162, Ser-190 and Ser-400 is increased in response to progesterone and can be phosphorylated in vitro by the CDK2-A1 complex. Increased levels of phosphorylation on Ser-400 also in the presence of EGF, heregulin, IGF, PMA and FBS. Phosphorylation at this site by CDK2 is ligand-independent, and increases nuclear translocation and transcriptional activity. Phosphorylation at Ser-162 and Ser-294, but not at Ser-190, is impaired during the G(2)/M phase of the cell cycle. Phosphorylation on Ser-345 by ERK1/2 MAPK is required for interaction with SP1. In terms of processing, sumoylation is hormone-dependent and represses transcriptional activity. Sumoylation on all three sites is enhanced by PIAS3. Desumoylated by SENP1. Sumoylation on Lys-388, the main site of sumoylation, is repressed by ubiquitination on the same site, and modulated by phosphorylation at Ser-294. Ubiquitination is hormone-dependent and represses sumoylation on the same site. Promoted by MAPK-mediated phosphorylation on Ser-294. Ubiquitinated by UBR5, leading to its degradation: UBR5 specifically recognizes and binds ligand-bound PGR when it is not associated with coactivators (NCOAs). In presence of NCOAs, the UBR5-degron is not accessible, preventing its ubiquitination and degradation. Post-translationally, palmitoylated by ZDHHC7 and ZDHHC21. Palmitoylation is required for plasma membrane targeting and for rapid intracellular signaling via ERK and AKT kinases and cAMP generation.

It is found in the nucleus. The protein localises to the cytoplasm. In terms of biological role, the steroid hormones and their receptors are involved in the regulation of eukaryotic gene expression and affect cellular proliferation and differentiation in target tissues. Transcriptional activator of several progesteron-dependent promoters in a variety of cell types. Involved in activation of SRC-dependent MAPK signaling on hormone stimulation. This Chlorocebus aethiops (Green monkey) protein is Progesterone receptor (PGR).